The sequence spans 148 residues: uncharacterized protein (148 aa).

The interval 83 to 148 (QPAVIPPVKA…TKKSNKKTRS (66 aa)) is disordered. Basic residues-rich tracts occupy residues 92–103 (AKPKATKKKTPV) and 113–124 (KQTKPKQSKPKS).

This is an uncharacterized protein from Mycoplasma genitalium (strain ATCC 33530 / DSM 19775 / NCTC 10195 / G37) (Mycoplasmoides genitalium).